A 390-amino-acid chain; its full sequence is Branched-chain-amino-acid aminotransferase (390 aa).

Position 225 is an N6-(pyridoxal phosphate)lysine (Lys-225).

It belongs to the class-IV pyridoxal-phosphate-dependent aminotransferase family. In terms of assembly, homodimer. Pyridoxal 5'-phosphate serves as cofactor.

It catalyses the reaction L-leucine + 2-oxoglutarate = 4-methyl-2-oxopentanoate + L-glutamate. It carries out the reaction L-isoleucine + 2-oxoglutarate = (S)-3-methyl-2-oxopentanoate + L-glutamate. The enzyme catalyses L-valine + 2-oxoglutarate = 3-methyl-2-oxobutanoate + L-glutamate. Catalyzes the first reaction in the catabolism of the essential branched chain amino acids leucine, isoleucine, and valine. The sequence is that of Branched-chain-amino-acid aminotransferase from Monosiga brevicollis (Choanoflagellate).